The primary structure comprises 99 residues: Large ribosomal subunit protein bL27 (99 aa).

A disordered region spans residues 1-21; the sequence is MAHKKGGGSTRNGRDSRAKRL.

This sequence belongs to the bacterial ribosomal protein bL27 family.

The polypeptide is Large ribosomal subunit protein bL27 (Thermomicrobium roseum (strain ATCC 27502 / DSM 5159 / P-2)).